Here is a 79-residue protein sequence, read N- to C-terminus: uncharacterized protein (79 aa).

Residues Met-1 to Ala-33 form the signal peptide.

This is an uncharacterized protein from Escherichia coli O157:H7.